The sequence spans 398 residues: 1,4-beta-D-glucan cellobiohydrolase CEL6C (398 aa).

An N-terminal signal peptide occupies residues 1 to 18 (MKITSSAAALALVASAVA). Residue N70 is glycosylated (N-linked (GlcNAc...) asparagine). Residue D125 is part of the active site. The active-site Proton donor is D170. Substrate contacts are provided by W218, W318, K346, and E350.

Belongs to the glycosyl hydrolase 6 (cellulase B) family. Both N- and O-glycosylated.

The protein localises to the secreted. The catalysed reaction is Hydrolysis of (1-&gt;4)-beta-D-glucosidic linkages in cellulose and cellotetraose, releasing cellobiose from the non-reducing ends of the chains.. Functionally, exoglucanase that plays an important function in biomass degradation by catalyzing the hydrolysis of the non-reducing end beta-1,4-glucosidic linkages in cellulose and cellotetraose to release cellobiose. Hydrolyzes crystalline and amorphous cellulose but is inactive on hydroxyethyl cellulose, mannan, galactomannan, xyloglucan, arabinoxylan, arabinan, xylan, and pectin. The sequence is that of 1,4-beta-D-glucan cellobiohydrolase CEL6C from Podospora anserina (strain S / ATCC MYA-4624 / DSM 980 / FGSC 10383) (Pleurage anserina).